The primary structure comprises 276 residues: Large ribosomal subunit protein uL2 (276 aa).

Disordered stretches follow at residues 29 to 55 (PEKS…RHRG) and 219 to 276 (HVRG…RRTR). A compositionally biased stretch (basic residues) spans 259-276 (TRNKKKQSSKLIVRRRTR).

Belongs to the universal ribosomal protein uL2 family. As to quaternary structure, part of the 50S ribosomal subunit. Forms a bridge to the 30S subunit in the 70S ribosome.

In terms of biological role, one of the primary rRNA binding proteins. Required for association of the 30S and 50S subunits to form the 70S ribosome, for tRNA binding and peptide bond formation. It has been suggested to have peptidyltransferase activity; this is somewhat controversial. Makes several contacts with the 16S rRNA in the 70S ribosome. The polypeptide is Large ribosomal subunit protein uL2 (Rippkaea orientalis (strain PCC 8801 / RF-1) (Cyanothece sp. (strain PCC 8801))).